The primary structure comprises 88 residues: Toxin RelE3 (88 aa).

Belongs to the RelE toxin family. As to quaternary structure, forms heterodimers with RelB3 and possibly a heterotetramer RelE3-RelB3(2)-RelE3 from 2 heterodimers. The heterotetramer is probably not very stable in solution.

In terms of biological role, toxic component of a type II toxin-antitoxin (TA) system. Has RNase activity. Is very toxic upon expression in E.coli. Its toxic activity is probably neutralized by the cognate antitoxin RelB3. The sequence is that of Toxin RelE3 (relE3) from Methanocaldococcus jannaschii (strain ATCC 43067 / DSM 2661 / JAL-1 / JCM 10045 / NBRC 100440) (Methanococcus jannaschii).